A 393-amino-acid chain; its full sequence is METFLFTSESVNEGHPDKLCDQISDAVLDACLEQDPESKVACETCTKTNLVMVFGEITTKAIVDYEKIVRDTCRNIGFVSDDVGLDADNCKVLVYIEQQSPDIAQGVHGHLTKRPEEIGAGDQGHMFGYATDETPELMPLSHVLATKLGARLTEVRKNGTCAWLRPDGKTQVTVEYSNDNGAMVPIRVHTVLISTQHDETVTNDEIARDLKEHVIKPVIPEKYLDENTIFHLNPSGRFVIGGPHGDAGLTGRKIIIDTYGGWGAHGGGAFSGKDPTKVDRSGAYIVRQAAKSIVASGLARRCIVQVSYAIGVPEPLSVFVDTYGTGKIPDREILKIVKENFDFRPGMMSINLDLKRGGNRRFLKTAAYGHFGRDDPDFTWEVVKPLKWEKPQD.

Position 9 (glutamate 9) interacts with Mg(2+). Position 15 (histidine 15) interacts with ATP. Position 43 (glutamate 43) interacts with K(+). L-methionine contacts are provided by glutamate 56 and glutamine 99. Residues 167 to 169, 235 to 238, aspartate 246, 252 to 253, alanine 269, lysine 273, and lysine 277 each bind ATP; these read DGK, SGRF, and RK. Aspartate 246 is a binding site for L-methionine. Lysine 277 is a binding site for L-methionine.

It belongs to the AdoMet synthase family. In terms of assembly, homotetramer. Requires Mn(2+) as cofactor. Mg(2+) serves as cofactor. It depends on Co(2+) as a cofactor. The cofactor is K(+). As to expression, mostly expressed in stems.

The protein localises to the cytoplasm. The catalysed reaction is L-methionine + ATP + H2O = S-adenosyl-L-methionine + phosphate + diphosphate. It functions in the pathway amino-acid biosynthesis; S-adenosyl-L-methionine biosynthesis; S-adenosyl-L-methionine from L-methionine: step 1/1. In terms of biological role, catalyzes the formation of S-adenosylmethionine from methionine and ATP. The reaction comprises two steps that are both catalyzed by the same enzyme: formation of S-adenosylmethionine (AdoMet) and triphosphate, and subsequent hydrolysis of the triphosphate. The protein is S-adenosylmethionine synthase 1 (SAM1) of Solanum lycopersicum (Tomato).